A 792-amino-acid chain; its full sequence is Lon protease (792 aa).

The Lon N-terminal domain occupies 16 to 208; it reads LPILPLRETV…KVTYYLTREL (193 aa). 360 to 367 contributes to the ATP binding site; that stretch reads GPPGVGKT. In terms of domain architecture, Lon proteolytic spans 597–778; the sequence is KDEVGVATGL…DEVLNLALLE (182 aa). Active-site residues include Ser684 and Lys727.

This sequence belongs to the peptidase S16 family. In terms of assembly, homohexamer. Organized in a ring with a central cavity.

It localises to the cytoplasm. The catalysed reaction is Hydrolysis of proteins in presence of ATP.. Functionally, ATP-dependent serine protease that mediates the selective degradation of mutant and abnormal proteins as well as certain short-lived regulatory proteins. Required for cellular homeostasis and for survival from DNA damage and developmental changes induced by stress. Degrades polypeptides processively to yield small peptide fragments that are 5 to 10 amino acids long. Binds to DNA in a double-stranded, site-specific manner. This Dictyoglomus thermophilum (strain ATCC 35947 / DSM 3960 / H-6-12) protein is Lon protease.